An 820-amino-acid chain; its full sequence is Leucine--tRNA ligase (820 aa).

Positions 40 to 51 (PYPSGAGLHVGH) match the 'HIGH' region motif. The short motif at 601 to 605 (KMSKS) is the 'KMSKS' region element. Lys-604 serves as a coordination point for ATP.

Belongs to the class-I aminoacyl-tRNA synthetase family.

The protein resides in the cytoplasm. It catalyses the reaction tRNA(Leu) + L-leucine + ATP = L-leucyl-tRNA(Leu) + AMP + diphosphate. The sequence is that of Leucine--tRNA ligase from Chlamydia pneumoniae (Chlamydophila pneumoniae).